A 130-amino-acid polypeptide reads, in one-letter code: Small ribosomal subunit protein uS11 (130 aa).

It belongs to the universal ribosomal protein uS11 family. In terms of assembly, part of the 30S ribosomal subunit. Interacts with proteins S7 and S18. Binds to IF-3.

In terms of biological role, located on the platform of the 30S subunit, it bridges several disparate RNA helices of the 16S rRNA. Forms part of the Shine-Dalgarno cleft in the 70S ribosome. The polypeptide is Small ribosomal subunit protein uS11 (Thermoanaerobacter sp. (strain X514)).